Consider the following 250-residue polypeptide: Phosphonates import ATP-binding protein PhnC (250 aa).

An ABC transporter domain is found at 2–247 (IVFNNVNKVW…KLDAQAMKKI (246 aa)). 35-42 (GLSGAGKT) is a binding site for ATP.

Belongs to the ABC transporter superfamily. Phosphonates importer (TC 3.A.1.9.1) family. In terms of assembly, the complex is composed of two ATP-binding proteins (PhnC), two transmembrane proteins (PhnE) and a solute-binding protein (PhnD).

It localises to the cell membrane. It catalyses the reaction phosphonate(out) + ATP + H2O = phosphonate(in) + ADP + phosphate + H(+). Functionally, part of the ABC transporter complex PhnCDE involved in phosphonates import. Responsible for energy coupling to the transport system. The polypeptide is Phosphonates import ATP-binding protein PhnC (Mycoplasma mycoides subsp. mycoides SC (strain CCUG 32753 / NCTC 10114 / PG1)).